The sequence spans 254 residues: Probable protein ABIL5 (254 aa).

The interval 1–26 (MEVAEAGVDGVAGRRQQEEASGAAPF) is disordered.

It belongs to the ABI family. In terms of assembly, binds SCAR.

Its subcellular location is the cytoplasm. The protein localises to the cytoskeleton. In terms of biological role, involved in regulation of actin and microtubule organization. Part of a WAVE complex that activates the Arp2/3 complex. The chain is Probable protein ABIL5 from Oryza sativa subsp. japonica (Rice).